Consider the following 318-residue polypeptide: tRNA-modifying protein YgfZ (318 aa).

Folate-binding residues include Trp-24 and Trp-185.

Belongs to the tRNA-modifying YgfZ family.

The protein localises to the cytoplasm. In terms of biological role, folate-binding protein involved in regulating the level of ATP-DnaA and in the modification of some tRNAs. It is probably a key factor in regulatory networks that act via tRNA modification, such as initiation of chromosomal replication. This chain is tRNA-modifying protein YgfZ, found in Buchnera aphidicola subsp. Baizongia pistaciae (strain Bp).